The chain runs to 300 residues: MKLRGCGTALVTPFKQDGSVDFAAQRALVEWQIESGIDFLVPCGTTGETPTLSHDEWLKVIAQTVEVNHGRVPIVAGATSNNTAEAVEKAKEVAAIKGVDAILTASPYYNKPTQEGQYLHFKAIAEAVDKPLVLYNVPGRTAANIETATLLRLAKIPNIIAVKEASGSLPQIMDVCAQKPEDFTVLSGDDALTLPILAVGGVGLVSVASNQIPKELSEMVRAALNNDWATARKLHNHFLALMNANFLESNPGPVKAVLAMMGRIEENYRLPMVPMRPENRAKLEKIAAEAGVLKNATVAQ.

Residue threonine 46 coordinates pyruvate. The Proton donor/acceptor role is filled by tyrosine 135. Lysine 163 serves as the catalytic Schiff-base intermediate with substrate. Valine 205 lines the pyruvate pocket.

It belongs to the DapA family. Homotetramer; dimer of dimers.

The protein resides in the cytoplasm. The catalysed reaction is L-aspartate 4-semialdehyde + pyruvate = (2S,4S)-4-hydroxy-2,3,4,5-tetrahydrodipicolinate + H2O + H(+). It participates in amino-acid biosynthesis; L-lysine biosynthesis via DAP pathway; (S)-tetrahydrodipicolinate from L-aspartate: step 3/4. Functionally, catalyzes the condensation of (S)-aspartate-beta-semialdehyde [(S)-ASA] and pyruvate to 4-hydroxy-tetrahydrodipicolinate (HTPA). This is 4-hydroxy-tetrahydrodipicolinate synthase from Koribacter versatilis (strain Ellin345).